The sequence spans 180 residues: Nucleoplasmin-3 (180 aa).

Ala2 carries the N-acetylalanine modification. Phosphoserine occurs at positions 13 and 16. Arg27 is subject to Omega-N-methylarginine. Residues 141–180 (TMSNDVSEEESEEEEEEEDSDEEEAELCPILPAKKQGGRP) form a disordered region. The span at 146-166 (VSEEESEEEEEEEDSDEEEAE) shows a compositional bias: acidic residues. A phosphoserine mark is found at Ser147, Ser151, and Ser160.

Belongs to the nucleoplasmin family. In terms of assembly, interacts with NPM (via N-terminus). Forms a pentamer with NPM at a ratio 4:1 (NPM3/NPM). Two pentamers form a decamer. Phosphorylated.

The protein resides in the nucleus. The protein localises to the nucleolus. In terms of biological role, plays a role in the regulation of diverse cellular processes such as ribosome biogenesis, chromatin remodeling or protein chaperoning. Modulates the histone chaperone function and the RNA-binding activity of nucleolar phosphoprotein B23/NPM. Efficiently mediates chromatin remodeling when included in a pentamer containing NPM3 and NPM. The chain is Nucleoplasmin-3 (NPM3) from Pongo abelii (Sumatran orangutan).